The primary structure comprises 294 residues: UPF0761 membrane protein YPK_4186 (294 aa).

The next 7 helical transmembrane spans lie at 44–64 (LLSL…FPMF), 67–87 (ISIK…GDII), 108–128 (GLIV…NIIW), 136–156 (LVFS…LVGA), 185–205 (VFPL…VPTV), 212–232 (ALIG…GFAM), and 246–266 (VLAV…IVLL).

The protein belongs to the UPF0761 family.

The protein resides in the cell inner membrane. The chain is UPF0761 membrane protein YPK_4186 from Yersinia pseudotuberculosis serotype O:3 (strain YPIII).